The primary structure comprises 153 residues: Transcriptional repressor NrdR (153 aa).

The segment at 3–34 (CPFCGYEDSKVVDTRPTNEGKTIKRRRECLKC) is a zinc-finger region. One can recognise an ATP-cone domain in the interval 49–139 (ILVIKKDNRR…VYRQFKDINT (91 aa)).

This sequence belongs to the NrdR family. The cofactor is Zn(2+).

Its function is as follows. Negatively regulates transcription of bacterial ribonucleotide reductase nrd genes and operons by binding to NrdR-boxes. This is Transcriptional repressor NrdR from Caldicellulosiruptor bescii (strain ATCC BAA-1888 / DSM 6725 / KCTC 15123 / Z-1320) (Anaerocellum thermophilum).